Reading from the N-terminus, the 179-residue chain is Inosine/xanthosine triphosphatase (179 aa).

Position 71 (E71) interacts with Mg(2+). Position 71–72 (71–72 (EA)) interacts with substrate.

It belongs to the YjjX NTPase family. As to quaternary structure, homodimer. Requires Mg(2+) as cofactor. Mn(2+) is required as a cofactor.

The enzyme catalyses XTP + H2O = XDP + phosphate + H(+). The catalysed reaction is ITP + H2O = IDP + phosphate + H(+). Its function is as follows. Phosphatase that hydrolyzes non-canonical purine nucleotides such as XTP and ITP to their respective diphosphate derivatives. Probably excludes non-canonical purines from DNA/RNA precursor pool, thus preventing their incorporation into DNA/RNA and avoiding chromosomal lesions. The sequence is that of Inosine/xanthosine triphosphatase from Shewanella oneidensis (strain ATCC 700550 / JCM 31522 / CIP 106686 / LMG 19005 / NCIMB 14063 / MR-1).